The chain runs to 1447 residues: Adhesion G protein-coupled receptor L3 (1447 aa).

The N-terminal stretch at M1–A19 is a signal peptide. The Extracellular portion of the chain corresponds to F20–L862. Residues S35 to V124 enclose the SUEL-type lectin domain. 5 disulfide bridges follow: C36/C66, C45/C123, C78/C110, C91/C97, and C135/C317. N93 carries an N-linked (GlcNAc...) asparagine glycan. An Olfactomedin-like domain is found at L134 to P393. The tract at residues Y249–E279 is interaction with FLRT3. Positions 264, 312, 313, and 367 each coordinate Ca(2+). The tract at residues D426–A473 is disordered. A compositionally biased stretch (low complexity) spans S428–S458. Residues N464, N549, N746, N759, N804, and N830 are each glycosylated (N-linked (GlcNAc...) asparagine). Positions D675–K854 constitute a GAIN-B domain. Intrachain disulfides connect C805–C836 and C824–C838. Residues C805 to K854 are GPS. The tract at residues T842–H855 is stachel. Residues L863–F888 traverse the membrane as a helical segment. Over F889 to R896 the chain is Cytoplasmic. A helical transmembrane segment spans residues N897–I918. The Extracellular segment spans residues N919–A926. A helical transmembrane segment spans residues C927–V950. A disulfide bond links C927 and C999. Residues Q951–R967 are Cytoplasmic-facing. Residues K968 to Y990 traverse the membrane as a helical segment. Topologically, residues R991–T1005 are extracellular. Residues Y1006–G1027 form a helical membrane-spanning segment. Residues I1028 to W1053 are Cytoplasmic-facing. The helical transmembrane segment at V1054 to M1073 threads the bilayer. At Y1074 to S1078 the chain is on the extracellular side. N-linked (GlcNAc...) asparagine glycosylation occurs at N1076. The helical transmembrane segment at T1079–L1104 threads the bilayer. Residues Q1105–L1447 are Cytoplasmic-facing. Positions G1123–G1147 are disordered. The residue at position 1164 (S1164) is a Phosphoserine. The disordered stretch occupies residues I1423–L1447. A PDZ-binding motif is present at residues H1442–L1447.

This sequence belongs to the G-protein coupled receptor 2 family. LN-TM7 subfamily. In terms of assembly, heterodimer of 2 chains generated by proteolytic processing; the large extracellular N-terminal fragment and the membrane-bound C-terminal fragment predominantly remain associated and non-covalently linked. Interacts (via olfactomedin-like domain) with FLRT1 (via extracellular domain). Interacts (via olfactomedin-like domain) with FLRT2 (via extracellular domain). Interacts (via olfactomedin-like domain) with FLRT3 (via extracellular domain); the interaction is direct. Interacts (via extracellular domain) with TENM1. Interacts (via extracellular domain) with TENM2. Interacts (via extracellular domain) with TENM3. Identified in a complex with FLRT3 and UNC5B; does not interact with UNC5B by itself. Identified in a complex with FLRT3 and UNC5D; does not interact with UNC5D by itself. Interacts (via PDZ-binding motif) with SHANK3. Interacts (via PDZ-binding motif) with DLG4. Post-translationally, autoproteolytically processed at the GPS region of the GAIN-B domain; this cleavage modulates receptor activity.

Its subcellular location is the cell membrane. It is found in the postsynaptic cell membrane. The protein resides in the cell projection. It localises to the axon. The protein localises to the cell junction. With respect to regulation, forms a heterodimer of 2 chains generated by proteolytic processing that remain associated through non-covalent interactions mediated by the GAIN-B domain. In the inactivated receptor, the Stachel sequence (also named stalk) is embedded in the GAIN-B domain, where it adopts a beta-strand conformation. On activation, the Stachel moves into the 7 transmembrane region and adopts a twisted hook-shaped configuration that forms contacts within the receptor, leading to coupling of a G-alpha protein, which activates signaling. The cleaved GAIN-B and N-terminal domains can then dissociate from the rest of the receptor. Its function is as follows. Orphan adhesion G-protein coupled receptor (aGPCR), which mediates synapse specificity. Ligand binding causes a conformation change that triggers signaling via guanine nucleotide-binding proteins (G proteins) and modulates the activity of downstream effectors. ADGRL3 is coupled with different classes of G alpha proteins, such as G(12)/G(13), G(s), G(i) or G(q), depending on the context. Coupling to G(12)/G(13) G proteins, which mediates the activation Rho small GTPases is the most efficient. Following G-protein coupled receptor activation, associates with cell adhesion molecules that are expressed at the surface of adjacent cells to direct synapse specificity. Specifically mediates the establishment of Schaffer-collateral synapses formed by CA3-region axons on CA1-region pyramidal neurons in the hippocampus. Localizes to postsynaptic spines in excitatory synapses in the S.oriens and S.radiatum and interacts with presynaptic cell adhesion molecules FLRT3 and TENM2, promoting synapse formation. Plays a role in the development of glutamatergic synapses in the cortex. Important in determining the connectivity rates between the principal neurons in the cortex. In terms of biological role, orphan adhesion G-protein coupled receptor (aGPCR), which mediates synapse specificity. Ligand binding causes a conformation change that triggers signaling via guanine nucleotide-binding proteins (G proteins) and modulates the activity of downstream effectors, such as adenylate cyclase. Isoform 1 is specifically coupled to G(s) G proteins and mediates activation of adenylate cyclase activity. Following G-protein coupled receptor activation, undergoes liquid-liquid phase transition, associates with (1) cell adhesion molecules that are expressed at the surface of adjacent cells, as well as (2) PDZ-containing proteins, such as SHANK3 and DLG4, in the cytoplasm to direct synapse formation. This Homo sapiens (Human) protein is Adhesion G protein-coupled receptor L3.